We begin with the raw amino-acid sequence, 194 residues long: dCTP deaminase (194 aa).

Residues 110 to 115 (RSSLAR), aspartate 128, 136 to 138 (VLE), tyrosine 171, lysine 178, and glutamine 182 each bind dCTP. Glutamate 138 functions as the Proton donor/acceptor in the catalytic mechanism. A disordered region spans residues 169–194 (RPYNKRDNAKYKDQTSAVGSRISGEN). Positions 170–181 (PYNKRDNAKYKD) are enriched in basic and acidic residues. Over residues 182-194 (QTSAVGSRISGEN) the composition is skewed to polar residues.

The protein belongs to the dCTP deaminase family. As to quaternary structure, homotrimer.

It catalyses the reaction dCTP + H2O + H(+) = dUTP + NH4(+). The protein operates within pyrimidine metabolism; dUMP biosynthesis; dUMP from dCTP (dUTP route): step 1/2. Functionally, catalyzes the deamination of dCTP to dUTP. This is dCTP deaminase from Marinomonas sp. (strain MWYL1).